The chain runs to 467 residues: Cysteine--tRNA ligase (467 aa).

Cys-29 lines the Zn(2+) pocket. The short motif at 31 to 41 (ATVQGEPHIGH) is the 'HIGH' region element. Residues Cys-207, His-232, and Glu-236 each contribute to the Zn(2+) site. A 'KMSKS' region motif is present at residues 263–267 (KMSKS). ATP is bound at residue Lys-266. The segment at 446–467 (IDVTDTPNGPEWSLRTARGKAN) is disordered.

Belongs to the class-I aminoacyl-tRNA synthetase family. Monomer. Requires Zn(2+) as cofactor.

It is found in the cytoplasm. It catalyses the reaction tRNA(Cys) + L-cysteine + ATP = L-cysteinyl-tRNA(Cys) + AMP + diphosphate. This Nocardia farcinica (strain IFM 10152) protein is Cysteine--tRNA ligase.